We begin with the raw amino-acid sequence, 277 residues long: Putative phosphoenolpyruvate synthase regulatory protein (277 aa).

An ADP-binding site is contributed by 157 to 164 (GVSRSGKT).

This sequence belongs to the pyruvate, phosphate/water dikinase regulatory protein family. PSRP subfamily.

The enzyme catalyses [pyruvate, water dikinase] + ADP = [pyruvate, water dikinase]-phosphate + AMP + H(+). It carries out the reaction [pyruvate, water dikinase]-phosphate + phosphate + H(+) = [pyruvate, water dikinase] + diphosphate. Its function is as follows. Bifunctional serine/threonine kinase and phosphorylase involved in the regulation of the phosphoenolpyruvate synthase (PEPS) by catalyzing its phosphorylation/dephosphorylation. The sequence is that of Putative phosphoenolpyruvate synthase regulatory protein from Azoarcus sp. (strain BH72).